The chain runs to 123 residues: Small ribosomal subunit protein uS12 (123 aa).

A 3-methylthioaspartic acid modification is found at Asp-89. The tract at residues Gly-100–Lys-123 is disordered. The segment covering Gly-113–Lys-123 has biased composition (basic residues).

The protein belongs to the universal ribosomal protein uS12 family. Part of the 30S ribosomal subunit. Contacts proteins S8 and S17. May interact with IF1 in the 30S initiation complex.

In terms of biological role, with S4 and S5 plays an important role in translational accuracy. Interacts with and stabilizes bases of the 16S rRNA that are involved in tRNA selection in the A site and with the mRNA backbone. Located at the interface of the 30S and 50S subunits, it traverses the body of the 30S subunit contacting proteins on the other side and probably holding the rRNA structure together. The combined cluster of proteins S8, S12 and S17 appears to hold together the shoulder and platform of the 30S subunit. This chain is Small ribosomal subunit protein uS12, found in Pseudomonas aeruginosa (strain LESB58).